Reading from the N-terminus, the 459-residue chain is Argininosuccinate lyase (459 aa).

Belongs to the lyase 1 family. Argininosuccinate lyase subfamily.

The protein resides in the cytoplasm. It catalyses the reaction 2-(N(omega)-L-arginino)succinate = fumarate + L-arginine. Its pathway is amino-acid biosynthesis; L-arginine biosynthesis; L-arginine from L-ornithine and carbamoyl phosphate: step 3/3. This Sulfurihydrogenibium sp. (strain YO3AOP1) protein is Argininosuccinate lyase.